The primary structure comprises 804 residues: Exo-1,4-beta-xylosidase xlnD (804 aa).

The N-terminal stretch at 1-26 (MAHSMSRPVAATAAALLALALPQALA) is a signal peptide. Residues Asn29, Asn124, Asn148, Asn242, and Asn251 are each glycosylated (N-linked (GlcNAc...) asparagine). Asp315 is a catalytic residue. 9 N-linked (GlcNAc...) asparagine glycosylation sites follow: Asn357, Asn390, Asn413, Asn444, Asn455, Asn573, Asn665, Asn696, and Asn718.

This sequence belongs to the glycosyl hydrolase 3 family.

Its subcellular location is the secreted. The enzyme catalyses Hydrolysis of (1-&gt;4)-beta-D-xylans, to remove successive D-xylose residues from the non-reducing termini.. It participates in glycan degradation; xylan degradation. In terms of biological role, xylan 1,4-beta-xylosidase involved in the hydrolysis of xylan, a major structural heterogeneous polysaccharide found in plant biomass representing the second most abundant polysaccharide in the biosphere, after cellulose. This is Exo-1,4-beta-xylosidase xlnD (xlnD) from Aspergillus awamori (Black koji mold).